Here is a 486-residue protein sequence, read N- to C-terminus: MQIKDLIYKVSLISVSGRTDVDVTAICFDSRKVEKGSMFIAVRGVSSDGHSFIADVIQKGATAVVCEELPEIESTADCTIIQVKDSAEALGMIASNFYDSPSSKLKLVGVTGTNGKTTTVTLLYRLFRKLGYKTGLLSTVENIIEDKVVQATHTTPDAISLNKLLADMVKAGCTHCFMEVSSHAAVQRRIAGLQFAGGLFSNITHDHLDYHKTFDEYIKAKKLFFDGLPNDSFALINSDDKRGRVMIQNTRAKTYTYSLLALADFKGKLISTTMQGLEMDVDGIQAWFRLIGNFNAYNLLAVYATAVLLGEDKEEVLMQLSTIEAANGRFEQQISATRITVIVDYAHTPDALKNVLETITELKGANKIITVVGCGGNRDAAKRPVMADIACQFSDHVVLTSDNPRNEEPQAILTEMEKGVRIVDKKKVLSVLDRKEAIKVACTLASTGDIILVAGKGHETYQEIKGVKYPFDDRLIIKELLDTLGK.

Ser-30 serves as a coordination point for UDP-N-acetyl-alpha-D-muramoyl-L-alanyl-D-glutamate. 112–118 (GTNGKTT) contacts ATP. UDP-N-acetyl-alpha-D-muramoyl-L-alanyl-D-glutamate-binding positions include 154 to 155 (TT), Ser-181, Gln-187, and Arg-189. N6-carboxylysine is present on Lys-221. Residues Arg-378, 402–405 (DNPR), Gly-455, and Glu-459 contribute to the meso-2,6-diaminopimelate site. The Meso-diaminopimelate recognition motif motif lies at 402 to 405 (DNPR).

The protein belongs to the MurCDEF family. MurE subfamily. It depends on Mg(2+) as a cofactor. Carboxylation is probably crucial for Mg(2+) binding and, consequently, for the gamma-phosphate positioning of ATP.

Its subcellular location is the cytoplasm. It catalyses the reaction UDP-N-acetyl-alpha-D-muramoyl-L-alanyl-D-glutamate + meso-2,6-diaminopimelate + ATP = UDP-N-acetyl-alpha-D-muramoyl-L-alanyl-gamma-D-glutamyl-meso-2,6-diaminopimelate + ADP + phosphate + H(+). Its pathway is cell wall biogenesis; peptidoglycan biosynthesis. Functionally, catalyzes the addition of meso-diaminopimelic acid to the nucleotide precursor UDP-N-acetylmuramoyl-L-alanyl-D-glutamate (UMAG) in the biosynthesis of bacterial cell-wall peptidoglycan. This Cytophaga hutchinsonii (strain ATCC 33406 / DSM 1761 / CIP 103989 / NBRC 15051 / NCIMB 9469 / D465) protein is UDP-N-acetylmuramoyl-L-alanyl-D-glutamate--2,6-diaminopimelate ligase.